A 198-amino-acid polypeptide reads, in one-letter code: Ribonuclease HII (198 aa).

An RNase H type-2 domain is found at 11-198; the sequence is NLIAGVDEVG…GPVKRVLGLV (188 aa). Asp17, Glu18, and Asp109 together coordinate a divalent metal cation.

The protein belongs to the RNase HII family. Requires Mn(2+) as cofactor. Mg(2+) serves as cofactor.

It is found in the cytoplasm. It carries out the reaction Endonucleolytic cleavage to 5'-phosphomonoester.. Functionally, endonuclease that specifically degrades the RNA of RNA-DNA hybrids. The sequence is that of Ribonuclease HII from Yersinia pseudotuberculosis serotype O:1b (strain IP 31758).